The following is a 198-amino-acid chain: MDPFSILLTLTLIILAQNAVRIVGKSQIHQSIWNLYLRYSNDQQILKLRNLKAESYDVYKQRSNTSAQDEYAKWTKLNRKYDQLQTEIKAVSDQVSQQQQAIEKYLGLAISVTTTLPLWLFRFKYRKQPLFYFPKDTFPSYLEWILSFPSVPQGSIGIMFWILLLNKFVSNLEFIVKTFSTKVEKPVPIVKVEDLSPK.

At 1-6 (MDPFSI) the chain is on the lumenal side. The helical transmembrane segment at 7–26 (LLTLTLIILAQNAVRIVGKS) threads the bilayer. Residues 27–110 (QIHQSIWNLY…AIEKYLGLAI (84 aa)) lie on the Cytoplasmic side of the membrane. The stretch at 73–106 (KWTKLNRKYDQLQTEIKAVSDQVSQQQQAIEKYL) forms a coiled coil. Residues 111-131 (SVTTTLPLWLFRFKYRKQPLF) traverse the membrane as a helical segment. Residues 132–155 (YFPKDTFPSYLEWILSFPSVPQGS) lie on the Lumenal side of the membrane. A helical transmembrane segment spans residues 156 to 172 (IGIMFWILLLNKFVSNL). The Cytoplasmic segment spans residues 173–198 (EFIVKTFSTKVEKPVPIVKVEDLSPK).

It belongs to the WRB/GET1 family. Component of the Golgi to ER traffic (GET) complex, which is composed of GET1, GET2 and GET3. Within the complex, GET1 and GET2 form a heterotetramer which is stabilized by phosphatidylinositol binding and which binds to the GET3 homodimer.

It localises to the endoplasmic reticulum membrane. It is found in the golgi apparatus membrane. Functionally, required for the post-translational delivery of tail-anchored (TA) proteins to the endoplasmic reticulum. Together with GET2, acts as a membrane receptor for soluble GET3, which recognizes and selectively binds the transmembrane domain of TA proteins in the cytosol. The GET complex cooperates with the HDEL receptor ERD2 to mediate the ATP-dependent retrieval of resident ER proteins that contain a C-terminal H-D-E-L retention signal from the Golgi to the ER. The chain is Golgi to ER traffic protein 1 from Komagataella phaffii (strain GS115 / ATCC 20864) (Yeast).